The following is a 463-amino-acid chain: Probable glucan endo-1,3-beta-glucosidase eglC (463 aa).

A signal peptide spans 1-18 (MQLTHLLAFALSLATSEA). The N-linked (GlcNAc...) asparagine glycan is linked to Asn84. The active-site Proton donor is Glu128. The N-linked (GlcNAc...) asparagine glycan is linked to Asn183. Residue Glu239 is the Nucleophile of the active site. Asn312 carries N-linked (GlcNAc...) asparagine glycosylation. Disordered regions lie at residues 317-354 (SASA…SSAV) and 396-430 (SGSS…NSGA). Gly440 is lipidated: GPI-anchor amidated glycine. The propeptide at 441-463 (GASSVSGSVFGALVAVFAFVATL) is removed in mature form.

The protein belongs to the glycosyl hydrolase 17 family. Post-translationally, the GPI-anchor is attached to the protein in the endoplasmic reticulum and serves to target the protein to the cell surface. There, the glucosamine-inositol phospholipid moiety is cleaved off and the GPI-modified mannoprotein is covalently attached via its lipidless GPI glycan remnant to the 1,6-beta-glucan of the outer cell wall layer.

Its subcellular location is the cell membrane. It is found in the secreted. It localises to the cell wall. The catalysed reaction is Hydrolysis of (1-&gt;3)-beta-D-glucosidic linkages in (1-&gt;3)-beta-D-glucans.. Functionally, glucanases play a role in cell expansion during growth, in cell-cell fusion during mating, and in spore release during sporulation. This enzyme may be involved in beta-glucan degradation and also function biosynthetically as a transglycosylase. The chain is Probable glucan endo-1,3-beta-glucosidase eglC (eglC) from Aspergillus oryzae (strain ATCC 42149 / RIB 40) (Yellow koji mold).